A 476-amino-acid polypeptide reads, in one-letter code: Serine/threonine-protein kinase Chk1 (476 aa).

Residues 1–265 form an interaction with CLSPN region; the sequence is MAVPFVEDWD…IPDIKKDRWY (265 aa). The 257-residue stretch at 9-265 folds into the Protein kinase domain; the sequence is WDLVQTLGEG…IPDIKKDRWY (257 aa). ATP is bound by residues 15–23 and K38; that span reads LGEGAYGEV. D130 acts as the Proton acceptor in catalysis. Residue K132 forms a Glycyl lysine isopeptide (Lys-Gly) (interchain with G-Cter in ubiquitin) linkage. Residues 270–327 are disordered; that stretch reads KKGAKRPRVTSGGVSESPSGFSKHIQSNLDFSPVNSASSEENVKYSSSQPEPRTGLSL. Phosphoserine occurs at positions 280, 286, 296, and 301. A compositionally biased stretch (polar residues) spans 281–320; sequence GGVSESPSGFSKHIQSNLDFSPVNSASSEENVKYSSSQPE. Position 317 is a phosphoserine; by ATM and ATR (S317). S331 carries the post-translational modification Phosphoserine. S345 is subject to Phosphoserine; by ATM and ATR. The segment at 391–476 is autoinhibitory region; sequence QCLKETCEKL…SSQKIWLPAT (86 aa). K436 is covalently cross-linked (Glycyl lysine isopeptide (Lys-Gly) (interchain with G-Cter in ubiquitin)). Phosphoserine is present on residues S467 and S468.

This sequence belongs to the protein kinase superfamily. CAMK Ser/Thr protein kinase family. NIM1 subfamily. As to quaternary structure, interacts (phosphorylated by ATR) with RAD51. Interacts with and phosphorylates CLSPN, an adapter protein that regulates the ATR-dependent phosphorylation of CHEK1. Interacts with BRCA1. Interacts with and phosphorylates CDC25A, CDC25B and CDC25C. Interacts with FBXO6, which regulates CHEK1. Interacts with PPM1D, which regulates CHEK1 through dephosphorylation. Interacts with TIMELESS; DNA damage-dependent. Interacts with FEM1B; activates CHEK1 in response to stress. Interacts with TLK1. Interacts with XPO1 and YWHAZ. Interacts with CDK5RAP3; antagonizes CHEK1. In terms of assembly, isoform 1 associates with isoform 2, the interaction is disrupted upon phosphorylation by ATR. In terms of processing, phosphorylated by ATR in a RAD17-dependent manner in response to ultraviolet irradiation and inhibition of DNA replication. Phosphorylated by ATM in response to ionizing irradiation. ATM and ATR can both phosphorylate Ser-317 and Ser-345 and this results in enhanced kinase activity. Phosphorylation at Ser-345 induces a change in the conformation of the protein, activates the kinase activity and is a prerequisite for interaction with FBXO6 and subsequent ubiquitination at Lys-436. Phosphorylation at Ser-345 also increases binding to 14-3-3 proteins and promotes nuclear retention. Conversely, dephosphorylation at Ser-345 by PPM1D may contribute to exit from checkpoint mediated cell cycle arrest. Phosphorylation at Ser-280 by AKT1/PKB, may promote mono and/or diubiquitination. Also phosphorylated at undefined residues during mitotic arrest, resulting in decreased activity. Post-translationally, ubiquitinated. Mono or diubiquitination promotes nuclear exclusion. The activated form (phosphorylated on Ser-345) is polyubiquitinated at Lys-436 by some SCF-type E3 ubiquitin ligase complex containing FBXO6 promoting its degradation. Ubiquitination and degradation are required to terminate the checkpoint and ensure that activated CHEK1 does not accumulate as cells progress through S phase, when replication forks encounter transient impediments during normal DNA replication. 'Lys-63'-mediated ubiquitination by TRAF4 at Lys-132 activates cell cycle arrest and activation of DNA repair. Proteolytically cleaved at the C-terminus by SPRTN during normal DNA replication, thereby promoting CHEK1 removal from chromatin and activating the protein kinase activity. In terms of tissue distribution, expressed ubiquitously with the most abundant expression in thymus, testis, small intestine and colon.

The protein resides in the nucleus. It localises to the chromosome. Its subcellular location is the cytoplasm. The protein localises to the cytoskeleton. It is found in the microtubule organizing center. The protein resides in the centrosome. It catalyses the reaction L-seryl-[protein] + ATP = O-phospho-L-seryl-[protein] + ADP + H(+). The enzyme catalyses L-threonyl-[protein] + ATP = O-phospho-L-threonyl-[protein] + ADP + H(+). Activated through phosphorylation predominantly by ATR but also by ATM in response to DNA damage or inhibition of DNA replication. Activation is modulated by several mediators including CLSPN, BRCA1 and FEM1B. Proteolytic cleavage at the C-terminus by SPRTN during normal DNA replication activates the protein kinase activity. Functionally, serine/threonine-protein kinase which is required for checkpoint-mediated cell cycle arrest and activation of DNA repair in response to the presence of DNA damage or unreplicated DNA. May also negatively regulate cell cycle progression during unperturbed cell cycles. This regulation is achieved by a number of mechanisms that together help to preserve the integrity of the genome. Recognizes the substrate consensus sequence [R-X-X-S/T]. Binds to and phosphorylates CDC25A, CDC25B and CDC25C. Phosphorylation of CDC25A at 'Ser-178' and 'Thr-507' and phosphorylation of CDC25C at 'Ser-216' creates binding sites for 14-3-3 proteins which inhibit CDC25A and CDC25C. Phosphorylation of CDC25A at 'Ser-76', 'Ser-124', 'Ser-178', 'Ser-279' and 'Ser-293' promotes proteolysis of CDC25A. Phosphorylation of CDC25A at 'Ser-76' primes the protein for subsequent phosphorylation at 'Ser-79', 'Ser-82' and 'Ser-88' by NEK11, which is required for polyubiquitination and degradation of CDCD25A. Inhibition of CDC25 leads to increased inhibitory tyrosine phosphorylation of CDK-cyclin complexes and blocks cell cycle progression. Also phosphorylates NEK6. Binds to and phosphorylates RAD51 at 'Thr-309', which promotes the release of RAD51 from BRCA2 and enhances the association of RAD51 with chromatin, thereby promoting DNA repair by homologous recombination. Phosphorylates multiple sites within the C-terminus of TP53, which promotes activation of TP53 by acetylation and promotes cell cycle arrest and suppression of cellular proliferation. Also promotes repair of DNA cross-links through phosphorylation of FANCE. Binds to and phosphorylates TLK1 at 'Ser-743', which prevents the TLK1-dependent phosphorylation of the chromatin assembly factor ASF1A. This may enhance chromatin assembly both in the presence or absence of DNA damage. May also play a role in replication fork maintenance through regulation of PCNA. May regulate the transcription of genes that regulate cell-cycle progression through the phosphorylation of histones. Phosphorylates histone H3.1 (to form H3T11ph), which leads to epigenetic inhibition of a subset of genes. May also phosphorylate RB1 to promote its interaction with the E2F family of transcription factors and subsequent cell cycle arrest. Phosphorylates SPRTN, promoting SPRTN recruitment to chromatin. Reduces replication stress and activates the G2/M checkpoint, by phosphorylating and inactivating PABIR1/FAM122A and promoting the serine/threonine-protein phosphatase 2A-mediated dephosphorylation and stabilization of WEE1 levels and activity. Endogenous repressor of isoform 1, interacts with, and antagonizes CHK1 to promote the S to G2/M phase transition. The sequence is that of Serine/threonine-protein kinase Chk1 (CHEK1) from Homo sapiens (Human).